Here is a 457-residue protein sequence, read N- to C-terminus: Glycine receptor subunit alpha-1 (457 aa).

The signal sequence occupies residues 1-28 (MYSFNTLRFYLWETIVFFSLAASKEAEA). Over 29–250 (ARSAPKPMSP…RFHLERQMGY (222 aa)) the chain is Extracellular. Asparagine 66 carries an N-linked (GlcNAc...) asparagine glycan. Glycine-binding residues include arginine 93 and serine 157. The cysteines at positions 166 and 180 are disulfide-linked. Zn(2+)-binding residues include glutamate 220 and aspartate 222. Cysteines 226 and 237 form a disulfide. 230-235 (YNTGKF) is a strychnine binding site. Residue threonine 232 coordinates glycine. Histidine 243 lines the Zn(2+) pocket. Residues 251–272 (YLIQMYIPSLLIVILSWISFWI) form a helical membrane-spanning segment. Residues 273–277 (NMDAA) are Cytoplasmic-facing. The chain crosses the membrane as a helical span at residues 278–298 (PARVGLGITTVLTMTTQSSGS). The Extracellular segment spans residues 299-309 (RASLPKVSYVK). Residues 310–330 (AIDIWMAVCLLFVFSALLEYA) traverse the membrane as a helical segment. Residues 331–425 (AVNFVSRQHK…FIQRAKKIDK (95 aa)) lie on the Cytoplasmic side of the membrane. Residues 391 to 410 (KGANNNNTTNPPPAPSKSPE) are disordered. Residues 426–446 (ISRIGFPMAFLIFNMFYWIIY) traverse the membrane as a helical segment. Topologically, residues 447-457 (KIVRREDVHNK) are extracellular.

It belongs to the ligand-gated ion channel (TC 1.A.9) family. Glycine receptor (TC 1.A.9.3) subfamily. GLRA1 sub-subfamily. As to quaternary structure, interacts with GLRB to form heteropentameric channels; this is probably the predominant form in vivo. Heteropentamer composed of four GLRA1 subunits and one GLRB subunit. Heteropentamer composed of two GLRA1 and three GLRB. Heteropentamer composed of three GLRA1 and two GLRB. Homopentamer (in vitro). Both homopentamers and heteropentamers form functional ion channels, but their characteristics are subtly different. In terms of tissue distribution, detected in spinal cord neurons. Detected in brain stem neurons. Detected at lower levels in hippocampus and cerebellum. Detected in the inner plexiform layer of the retina (at protein level).

It is found in the postsynaptic cell membrane. Its subcellular location is the synapse. The protein localises to the perikaryon. The protein resides in the cell projection. It localises to the dendrite. It is found in the cell membrane. The catalysed reaction is chloride(in) = chloride(out). With respect to regulation, channel opening is triggered by extracellular glycine. Channel characteristics depend on the subunit composition; heteropentameric channels are activated by lower glycine levels and display faster desensitization. Channel opening is also triggered by taurine and beta-alanine. Inhibited by strychnine. Strychnine binding locks the channel in a closed conformation and prevents channel opening in response to extracellular glycine. Inhibited by picrotoxin. Channel activity is enhanced by 5 uM Zn(2+) and inhibited by 100 uM Zn(2+). Subunit of heteromeric glycine-gated chloride channels. Plays an important role in the down-regulation of neuronal excitability. Contributes to the generation of inhibitory postsynaptic currents. Channel activity is potentiated by ethanol. Potentiation of channel activity by intoxicating levels of ethanol contribute to the sedative effects of ethanol. The chain is Glycine receptor subunit alpha-1 (Glra1) from Mus musculus (Mouse).